The sequence spans 672 residues: Beta-galactosidase bgaB (672 aa).

Substrate is bound at residue Arg109. Cys113 provides a ligand contact to Zn(2+). Asn147 contacts substrate. Glu148 serves as the catalytic Proton donor. Positions 156, 158, and 161 each coordinate Zn(2+). Glu303 (nucleophile) is an active-site residue. Substrate contacts are provided by residues Trp311 and Glu351–His354.

This sequence belongs to the glycosyl hydrolase 42 family.

The catalysed reaction is Hydrolysis of terminal non-reducing beta-D-galactose residues in beta-D-galactosides.. By divalent metal ions. Fe(2+), Zn(2+), Cu(2+), Pb(2+) and Sn(2+) inhibit 52, 76.6, 85.3, 100 and 100% of the enzyme activity, respectively. Other metal cations and EDTA do not inhibit this enzyme. Thiol reagents 2-mercaptoethanol and dithiothreitol have no effect on the activity. Sulfhydryl group-blocking reagents p-chloromercuribenzoic acid and iodoacetic acid inhibit 86.2 and 74% of the enzyme activity, respectively. Functionally, hydrolyzes 6-bromo-2-naphthyl-beta-D-galactopyranoside and o-nitrophenyl-beta-D-galactopyranoside (ONPG). Possesses a high level of transgalactosylation activity. Hydrolyzes lactose in milk. The chain is Beta-galactosidase bgaB (bgaB) from Geobacillus kaustophilus.